Consider the following 211-residue polypeptide: uncharacterized protein (211 aa).

Residues histidine 54, histidine 56, aspartate 58, histidine 59, histidine 129, aspartate 148, and histidine 189 each coordinate Zn(2+).

It belongs to the metallo-beta-lactamase superfamily. Glyoxalase II family. The cofactor is Zn(2+).

This is an uncharacterized protein from Aquifex aeolicus (strain VF5).